A 132-amino-acid chain; its full sequence is Chaperone protein SycT (132 aa).

In terms of assembly, binds to YopT.

Its function is as follows. Functions as a specific chaperone for YopT. The protein is Chaperone protein SycT (sycT) of Yersinia pestis.